A 563-amino-acid polypeptide reads, in one-letter code: Dicarboxylate transporter 2.1, chloroplastic (563 aa).

Residues 1-68 constitute a chloroplast transit peptide; it reads MESFALHSLS…LKPIPRFSTR (68 aa). Disordered stretches follow at residues 16–45 and 71–92; these read TLLSHHHHHHPSRLSLLRRTSSRSPPSTIS and AAPQDNAPPPPPPSPSPSPSPQ. Residues 28 to 45 are compositionally biased toward low complexity; it reads RLSLLRRTSSRSPPSTIS. Residues 76-90 are compositionally biased toward pro residues; the sequence is NAPPPPPPSPSPSPS. Helical transmembrane passes span 96-116, 134-154, 165-185, 234-254, 261-281, 308-328, 358-378, 379-399, 414-434, 450-470, 483-503, and 537-557; these read LIPLILSISVGLILRFAVPVP, IAGLVLSPLPVGAWAFIGLTA, AAFSAFTSEVIWLIVISFFFA, AGGIFLPIIKSLSLSAGSKPN, LGSYLIQSQFQCAGNSSALFL, WFKAASLPAIISLLCTPLILY, NEWIMVGTMLLAVTLWICGET, LGIPSVVAAMIGLSILLVLGV, TLAWFAVLVGMAGQLTNLGVV, LSWPAAFGLLQAAYFFIHYLF, AFLAMHIAAGVPGILAALALA, and IGFVMATINAIIWGVVGTFWW.

The protein belongs to the SLC13A/DASS transporter (TC 2.A.47) family. DIT1 subfamily. As to expression, expressed in roots, rosette and cauline leaves, stems, flowers and siliques.

The protein resides in the plastid. It is found in the chloroplast inner membrane. In terms of biological role, glutamate/malate translocator involved with DIT1 in primary ammonia assimilation and in the re-assimilation of ammonia generated by the photorespiratory pathway. Exports the end product of ammonia assimilation, glutamate, from plastids to the cytosol. The precursor for ammonia assimilation, 2-oxoglutarate, is imported from the cytosol by DIT1. This Arabidopsis thaliana (Mouse-ear cress) protein is Dicarboxylate transporter 2.1, chloroplastic (DIT2-1).